Here is a 404-residue protein sequence, read N- to C-terminus: Sorting nexin-32 (404 aa).

A compositionally biased stretch (basic and acidic residues) spans 1–10; the sequence is MEEQHQEAGN. The tract at residues 1–29 is disordered; sequence MEEQHQEAGNESKPSSTSVDLQGDSPLQV. A compositionally biased stretch (polar residues) spans 11–20; sequence ESKPSSTSVD. The PX domain occupies 21–168; it reads LQGDSPLQVE…SVFLEYSQDL (148 aa). The stretch at 255 to 336 forms a coiled coil; that stretch reads TQEVNQLKRS…KARTRNREVR (82 aa).

The protein belongs to the sorting nexin family.

Functionally, may be involved in several stages of intracellular trafficking. This Mus musculus (Mouse) protein is Sorting nexin-32 (Snx32).